The sequence spans 685 residues: Small ribosomal subunit protein mS39 (685 aa).

The transit peptide at Met1–Arg10 directs the protein to the mitochondrion. Lys127 carries the N6-acetyllysine modification. PPR repeat units lie at residues Ile150 to Val184, Ser185 to Glu220, Asn254 to Ala288, Asp289 to Pro329, Asn330 to Pro366, Ser367 to Pro407, Asp412 to Lys446, Arg454 to Pro488, His489 to Phe523, and Pro572 to Pro606. The segment at Leu663 to Lys685 is disordered. Residues Ser676–Lys685 are compositionally biased toward acidic residues.

Belongs to the mitochondrion-specific ribosomal protein mS39 family. Component of the mitochondrial ribosome small subunit (28S) which comprises a 12S rRNA and about 30 distinct proteins. Associated with the 12S mitochondrial rRNA (12S mt-rRNA).

It is found in the mitochondrion. In terms of biological role, mitochondrial RNA-binding protein that has a role in mitochondrial translation. This is Small ribosomal subunit protein mS39 (Ptcd3) from Mus musculus (Mouse).